The following is a 317-amino-acid chain: Spore protein CgeB (317 aa).

In terms of biological role, may be involved in maturation of the outermost layer of the spore. May act as a glycosyltransferase that contributes to the glycosylation state of the spore. This is Spore protein CgeB from Bacillus subtilis (strain 168).